The chain runs to 287 residues: Polyamine aminopropyltransferase (287 aa).

Residues 5–238 form the PABS domain; it reads EIWYETLHAN…GIMTFAWASN (234 aa). Position 33 (Gln33) interacts with S-methyl-5'-thioadenosine. Positions 64 and 88 each coordinate spermidine. S-methyl-5'-thioadenosine contacts are provided by residues Glu108 and 140–141; that span reads DG. The active-site Proton acceptor is Asp158. Spermidine is bound at residue 158-161; that stretch reads DCTD. Pro165 lines the S-methyl-5'-thioadenosine pocket.

It belongs to the spermidine/spermine synthase family. Homodimer or homotetramer.

The protein resides in the cytoplasm. It carries out the reaction S-adenosyl 3-(methylsulfanyl)propylamine + putrescine = S-methyl-5'-thioadenosine + spermidine + H(+). Its pathway is amine and polyamine biosynthesis; spermidine biosynthesis; spermidine from putrescine: step 1/1. In terms of biological role, catalyzes the irreversible transfer of a propylamine group from the amino donor S-adenosylmethioninamine (decarboxy-AdoMet) to putrescine (1,4-diaminobutane) to yield spermidine. This Pectobacterium atrosepticum (strain SCRI 1043 / ATCC BAA-672) (Erwinia carotovora subsp. atroseptica) protein is Polyamine aminopropyltransferase.